We begin with the raw amino-acid sequence, 708 residues long: Fatty acid oxidation complex subunit alpha (708 aa).

Residues 1-190 (MDMEKTFNLT…KMGLVDDAVP (190 aa)) form an enoyl-CoA hydratase region. Residues 310–708 (QKVNKVMVLG…MAEEGTRFFS (399 aa)) form a 3-hydroxyacyl-CoA dehydrogenase region.

This sequence in the N-terminal section; belongs to the enoyl-CoA hydratase/isomerase family. The protein in the central section; belongs to the 3-hydroxyacyl-CoA dehydrogenase family. Heterotetramer of two alpha chains (FadJ) and two beta chains (FadI).

It localises to the cytoplasm. The enzyme catalyses a (3S)-3-hydroxyacyl-CoA = a (2E)-enoyl-CoA + H2O. The catalysed reaction is a 4-saturated-(3S)-3-hydroxyacyl-CoA = a (3E)-enoyl-CoA + H2O. It carries out the reaction a (3S)-3-hydroxyacyl-CoA + NAD(+) = a 3-oxoacyl-CoA + NADH + H(+). It catalyses the reaction (3S)-3-hydroxybutanoyl-CoA = (3R)-3-hydroxybutanoyl-CoA. Its pathway is lipid metabolism; fatty acid beta-oxidation. Its function is as follows. Catalyzes the formation of a hydroxyacyl-CoA by addition of water on enoyl-CoA. Also exhibits 3-hydroxyacyl-CoA epimerase and 3-hydroxyacyl-CoA dehydrogenase activities. The sequence is that of Fatty acid oxidation complex subunit alpha from Shewanella halifaxensis (strain HAW-EB4).